Here is a 492-residue protein sequence, read N- to C-terminus: UPF0236 protein TTE1650/TTE2708 (492 aa).

The protein belongs to the UPF0236 family.

This chain is UPF0236 protein TTE1650/TTE2708, found in Caldanaerobacter subterraneus subsp. tengcongensis (strain DSM 15242 / JCM 11007 / NBRC 100824 / MB4) (Thermoanaerobacter tengcongensis).